The sequence spans 428 residues: Phosphomethylpyrimidine synthase 2 (428 aa).

Substrate is bound by residues methionine 94, tyrosine 123, histidine 162, 184 to 186, 225 to 228, and glutamate 264; these read SRG and NGMR. Histidine 268 contacts Zn(2+). Residue tyrosine 291 participates in substrate binding. A Zn(2+)-binding site is contributed by histidine 332. [4Fe-4S] cluster is bound by residues cysteine 408, cysteine 411, and cysteine 415.

This sequence belongs to the ThiC family. Requires [4Fe-4S] cluster as cofactor.

The enzyme catalyses 5-amino-1-(5-phospho-beta-D-ribosyl)imidazole + S-adenosyl-L-methionine = 4-amino-2-methyl-5-(phosphooxymethyl)pyrimidine + CO + 5'-deoxyadenosine + formate + L-methionine + 3 H(+). The protein operates within cofactor biosynthesis; thiamine diphosphate biosynthesis. Its function is as follows. Catalyzes the synthesis of the hydroxymethylpyrimidine phosphate (HMP-P) moiety of thiamine from aminoimidazole ribotide (AIR) in a radical S-adenosyl-L-methionine (SAM)-dependent reaction. This Methanosarcina mazei (strain ATCC BAA-159 / DSM 3647 / Goe1 / Go1 / JCM 11833 / OCM 88) (Methanosarcina frisia) protein is Phosphomethylpyrimidine synthase 2.